A 402-amino-acid chain; its full sequence is Argininosuccinate synthase (402 aa).

Residues 10-18 (AYSGGLDTS) and Ala37 contribute to the ATP site. The L-citrulline site is built by Tyr88 and Ser93. Gly118 serves as a coordination point for ATP. L-aspartate is bound by residues Thr120, Asn124, and Asp125. L-citrulline is bound at residue Asn124. 5 residues coordinate L-citrulline: Arg128, Ser179, Ser188, Glu264, and Tyr276.

This sequence belongs to the argininosuccinate synthase family. Type 1 subfamily. Homotetramer.

Its subcellular location is the cytoplasm. The catalysed reaction is L-citrulline + L-aspartate + ATP = 2-(N(omega)-L-arginino)succinate + AMP + diphosphate + H(+). It participates in amino-acid biosynthesis; L-arginine biosynthesis; L-arginine from L-ornithine and carbamoyl phosphate: step 2/3. This chain is Argininosuccinate synthase, found in Alkalilimnicola ehrlichii (strain ATCC BAA-1101 / DSM 17681 / MLHE-1).